Here is a 158-residue protein sequence, read N- to C-terminus: MTTVIYPGTFDPITNGHMDIIQRSAVLFSKVIVAVAKNPSKQPLFNLAERVELVQLSVVHLDNVEVIGFDDLLANVVKARQIDAIIRGVRTTMDFEYESQLAHLNRLLTNGVESLFLPPTEQWSYVSSTIVRDIFLHQGDVSRLVPAAVLRALEKRAK.

Residue threonine 9 participates in substrate binding. ATP-binding positions include 9-10 and histidine 17; that span reads TF. Residues lysine 41, leucine 73, and arginine 87 each contribute to the substrate site. Residues 88–90, glutamate 98, and 123–129 each bind ATP; these read GVR and WSYVSST.

This sequence belongs to the bacterial CoaD family. Homohexamer. The cofactor is Mg(2+).

It is found in the cytoplasm. It catalyses the reaction (R)-4'-phosphopantetheine + ATP + H(+) = 3'-dephospho-CoA + diphosphate. It participates in cofactor biosynthesis; coenzyme A biosynthesis; CoA from (R)-pantothenate: step 4/5. Functionally, reversibly transfers an adenylyl group from ATP to 4'-phosphopantetheine, yielding dephospho-CoA (dPCoA) and pyrophosphate. The polypeptide is Phosphopantetheine adenylyltransferase (Histophilus somni (strain 2336) (Haemophilus somnus)).